A 152-amino-acid chain; its full sequence is SsrA-binding protein (152 aa).

The protein belongs to the SmpB family.

The protein resides in the cytoplasm. Required for rescue of stalled ribosomes mediated by trans-translation. Binds to transfer-messenger RNA (tmRNA), required for stable association of tmRNA with ribosomes. tmRNA and SmpB together mimic tRNA shape, replacing the anticodon stem-loop with SmpB. tmRNA is encoded by the ssrA gene; the 2 termini fold to resemble tRNA(Ala) and it encodes a 'tag peptide', a short internal open reading frame. During trans-translation Ala-aminoacylated tmRNA acts like a tRNA, entering the A-site of stalled ribosomes, displacing the stalled mRNA. The ribosome then switches to translate the ORF on the tmRNA; the nascent peptide is terminated with the 'tag peptide' encoded by the tmRNA and targeted for degradation. The ribosome is freed to recommence translation, which seems to be the essential function of trans-translation. This chain is SsrA-binding protein, found in Rickettsia rickettsii.